The chain runs to 570 residues: Pre-mRNA 3'-end-processing factor FIP1 (570 aa).

Over residues 1-10 (MSAEEADKTT) the composition is skewed to basic and acidic residues. The segment at 1 to 107 (MSAEEADKTT…SDDDDDDVRV (107 aa)) is disordered. The span at 16-38 (AGDEEEEWLYGDEGESKETEEEE) shows a compositional bias: acidic residues. Low complexity predominate over residues 56–77 (DAPTTTNNSSDSATPPTTTTTT). Over residues 87-104 (APGEDEDSESDSDDDDDD) the composition is skewed to acidic residues. Phosphothreonine is present on threonine 125. Serine 247 is subject to Phosphoserine. 3 disordered regions span residues 300-328 (RRRH…VQKM), 371-400 (PNFP…YDGR), and 418-570 (GAVN…EAME). The span at 371 to 384 (PNFPPPTGGPPPSL) shows a compositional bias: pro residues. Basic and acidic residues-rich tracts occupy residues 436 to 462 (YPRR…RDHS) and 476 to 506 (DEER…EERH). Basic residues-rich tracts occupy residues 520–529 (KSSRSSSRRR) and 538–548 (HRRHKHKKSKR). The segment covering 549 to 562 (SKEGKEPSEERSAD) has biased composition (basic and acidic residues).

It belongs to the FIP1 family.

It localises to the nucleus. Its function is as follows. Involved in mRNA processing. The chain is Pre-mRNA 3'-end-processing factor FIP1 (fip1l1) from Danio rerio (Zebrafish).